The following is a 127-amino-acid chain: Fluoride-specific ion channel FluC (127 aa).

Transmembrane regions (helical) follow at residues 4-24, 35-55, 71-91, and 103-123; these read LLLA…LLSM, LGTL…FAWF, TGFC…VFLL, and VFVN…LFSA. Residues Gly-75 and Thr-78 each contribute to the Na(+) site.

The protein belongs to the fluoride channel Fluc/FEX (TC 1.A.43) family.

The protein localises to the cell inner membrane. It catalyses the reaction fluoride(in) = fluoride(out). With respect to regulation, na(+) is not transported, but it plays an essential structural role and its presence is essential for fluoride channel function. Functionally, fluoride-specific ion channel. Important for reducing fluoride concentration in the cell, thus reducing its toxicity. The polypeptide is Fluoride-specific ion channel FluC (Escherichia coli (strain ATCC 8739 / DSM 1576 / NBRC 3972 / NCIMB 8545 / WDCM 00012 / Crooks)).